Consider the following 27-residue polypeptide: Trichocyst matrix protein T4-C (27 aa).

The protein belongs to the TMP family.

The protein localises to the trichocyst. Its function is as follows. Structural protein that crystallize inside the trichocyst matrix. This is Trichocyst matrix protein T4-C (T4C) from Paramecium tetraurelia.